The following is a 663-amino-acid chain: MNKQNNYSDDSIQVLEGLEAVRKRPGMYIGSTDKRGLHHLVYEIVDNSVDEVLNGYGNEIDVTINKDGSISIEDNGRGMPTGIHKSGKPTVEVIFTVLHAGGKFGQGGYKTSGGLHGVGASVVNALSEWLEVEIHRDGNIYHQSFKNGGSPSSGLVKKGKTKKTGTKVTFKPDDTIFKASTSFNFDVLSERLQESAFLLKNLKITLNDLRSGKERQEHYHYEEGIKEFVSYVNEGKEVLHDVATFSGEANGIEVDVAFQYNDQYSESILSFVNNVRTKDGGTHEVGFKTAMTRVFNDYARRINELKTKDKNLDGNDIREGLTAVVSVRIPEELLQFEGQTKSKLGTSEARSAVDSVVADKLPFYLEEKGQLSKSLVKKAIKAQQAREAARKAREDARSGKKNKRKDTLLSGKLTPAQSKNTDKNELYLVEGDSAGGSAKLGRDRKFQAILPLRGKVINTEKARLEDIFKNEEINTIIHTIGAGVGTDFKIEDSNYNRVIIMTDADTDGAHIQVLLLTFFFKYMKPLVQAGRVFIALPPLYKLEKGKGKTKRVEYAWTDEELNKLQKELGKGFTLQRYKGLGEMNPEQLWETTMNPETRTLIRVQVEDEVRSSKRVTTLMGDKVQPRREWIEKHFEFGMQEDQSILDNSEVQVLENDQFDEEEI.

ATP-binding positions include Tyr7, Asn47, Asp74, 114-120, and Lys341; that span reads GLHGVGA. The tract at residues 386 to 418 is disordered; it reads REAARKAREDARSGKKNKRKDTLLSGKLTPAQS. Residues 387–398 are compositionally biased toward basic and acidic residues; it reads EAARKAREDARS. The Toprim domain maps to 424–538; sequence NELYLVEGDS…AGRVFIALPP (115 aa). 3 residues coordinate Mg(2+): Glu430, Asp503, and Asp505.

Belongs to the type II topoisomerase family. ParE type 2 subfamily. In terms of assembly, heterotetramer composed of ParC and ParE. The cofactor is Mg(2+). Mn(2+) is required as a cofactor. Ca(2+) serves as cofactor.

The enzyme catalyses ATP-dependent breakage, passage and rejoining of double-stranded DNA.. In terms of biological role, topoisomerase IV is essential for chromosome segregation. It relaxes supercoiled DNA. Performs the decatenation events required during the replication of a circular DNA molecule. The polypeptide is DNA topoisomerase 4 subunit B (Staphylococcus aureus (strain MRSA252)).